Reading from the N-terminus, the 287-residue chain is 4-diphosphocytidyl-2-C-methyl-D-erythritol kinase (287 aa).

Residue Lys-12 is part of the active site. Position 94-104 (Pro-94–Ser-104) interacts with ATP. The active site involves Asp-136.

Belongs to the GHMP kinase family. IspE subfamily.

The enzyme catalyses 4-CDP-2-C-methyl-D-erythritol + ATP = 4-CDP-2-C-methyl-D-erythritol 2-phosphate + ADP + H(+). It participates in isoprenoid biosynthesis; isopentenyl diphosphate biosynthesis via DXP pathway; isopentenyl diphosphate from 1-deoxy-D-xylulose 5-phosphate: step 3/6. Functionally, catalyzes the phosphorylation of the position 2 hydroxy group of 4-diphosphocytidyl-2C-methyl-D-erythritol. The chain is 4-diphosphocytidyl-2-C-methyl-D-erythritol kinase from Albidiferax ferrireducens (strain ATCC BAA-621 / DSM 15236 / T118) (Rhodoferax ferrireducens).